The sequence spans 426 residues: Histidinol dehydrogenase (426 aa).

NAD(+) is bound by residues tyrosine 125, glutamine 187, and asparagine 210. The substrate site is built by serine 233, glutamine 255, and histidine 258. Zn(2+) contacts are provided by glutamine 255 and histidine 258. Active-site proton acceptor residues include glutamate 323 and histidine 324. Substrate-binding residues include histidine 324, aspartate 357, glutamate 411, and histidine 416. Position 357 (aspartate 357) interacts with Zn(2+). Histidine 416 contacts Zn(2+).

Belongs to the histidinol dehydrogenase family. It depends on Zn(2+) as a cofactor.

The enzyme catalyses L-histidinol + 2 NAD(+) + H2O = L-histidine + 2 NADH + 3 H(+). Its pathway is amino-acid biosynthesis; L-histidine biosynthesis; L-histidine from 5-phospho-alpha-D-ribose 1-diphosphate: step 9/9. Its function is as follows. Catalyzes the sequential NAD-dependent oxidations of L-histidinol to L-histidinaldehyde and then to L-histidine. The polypeptide is Histidinol dehydrogenase (hisD) (Methanothermobacter thermautotrophicus (strain ATCC 29096 / DSM 1053 / JCM 10044 / NBRC 100330 / Delta H) (Methanobacterium thermoautotrophicum)).